Consider the following 185-residue polypeptide: MVEAGDFRRGLTIEYDGQIFQVIEFLHVKPGKGAAFVRTKLKNIKTGAVIEKTFRPDERMPLAHIERREMQYLYNDGELYYFMDTQTYEQIALNQEMVGDALKFVKENMTVTVLSHNGVVFGVEPPRFVELEVIDTEPGFKGDTQTGATKPAKVETGAVIQVPLFINVGDKIKIDTSTEEYLSRV.

The protein belongs to the elongation factor P family.

Its subcellular location is the cytoplasm. It participates in protein biosynthesis; polypeptide chain elongation. Functionally, involved in peptide bond synthesis. Stimulates efficient translation and peptide-bond synthesis on native or reconstituted 70S ribosomes in vitro. Probably functions indirectly by altering the affinity of the ribosome for aminoacyl-tRNA, thus increasing their reactivity as acceptors for peptidyl transferase. The sequence is that of Elongation factor P from Caldicellulosiruptor bescii (strain ATCC BAA-1888 / DSM 6725 / KCTC 15123 / Z-1320) (Anaerocellum thermophilum).